The chain runs to 78 residues: Acyl carrier protein (78 aa).

Positions 2-77 (SDTAERVKKI…DAVKYIEKAT (76 aa)) constitute a Carrier domain. Ser37 is subject to O-(pantetheine 4'-phosphoryl)serine.

Belongs to the acyl carrier protein (ACP) family. In terms of processing, 4'-phosphopantetheine is transferred from CoA to a specific serine of apo-ACP by AcpS. This modification is essential for activity because fatty acids are bound in thioester linkage to the sulfhydryl of the prosthetic group.

Its subcellular location is the cytoplasm. It participates in lipid metabolism; fatty acid biosynthesis. Its function is as follows. Carrier of the growing fatty acid chain in fatty acid biosynthesis. The protein is Acyl carrier protein of Chelativorans sp. (strain BNC1).